Reading from the N-terminus, the 507-residue chain is Bifunctional purine biosynthesis protein PurH (507 aa).

The 144-residue stretch at 1-144 (MKRALLSVSD…KNSDSVWAVV (144 aa)) folds into the MGS-like domain.

This sequence belongs to the PurH family.

It carries out the reaction (6R)-10-formyltetrahydrofolate + 5-amino-1-(5-phospho-beta-D-ribosyl)imidazole-4-carboxamide = 5-formamido-1-(5-phospho-D-ribosyl)imidazole-4-carboxamide + (6S)-5,6,7,8-tetrahydrofolate. The catalysed reaction is IMP + H2O = 5-formamido-1-(5-phospho-D-ribosyl)imidazole-4-carboxamide. Its pathway is purine metabolism; IMP biosynthesis via de novo pathway; 5-formamido-1-(5-phospho-D-ribosyl)imidazole-4-carboxamide from 5-amino-1-(5-phospho-D-ribosyl)imidazole-4-carboxamide (10-formyl THF route): step 1/1. It functions in the pathway purine metabolism; IMP biosynthesis via de novo pathway; IMP from 5-formamido-1-(5-phospho-D-ribosyl)imidazole-4-carboxamide: step 1/1. This Lacticaseibacillus paracasei (strain ATCC 334 / BCRC 17002 / CCUG 31169 / CIP 107868 / KCTC 3260 / NRRL B-441) (Lactobacillus paracasei) protein is Bifunctional purine biosynthesis protein PurH.